The following is a 449-amino-acid chain: Protein cortex (449 aa).

WD repeat units follow at residues 108 to 148 (TYSY…ISQG), 149 to 188 (YAEY…KIDS), 198 to 237 (NRNC…ISWR), 283 to 327 (DSDW…VRDT), 345 to 382 (TGEL…DQWG), and 386 to 425 (SGLD…KKMK). The D-box motif lies at 386–397 (SGLDRVRTMVFS).

It belongs to the WD repeat CORT family.

Its subcellular location is the cytoplasm. In terms of biological role, controls wing pigmentation patterning by regulating scale cell development, thereby playing a key role in mimicry and crypsis. Probably acts as an activator of the anaphase promoting complex/cyclosome (APC/C) that promotes the ubiquitin ligase activity and substrate specificity of the APC/C. The sequence is that of Protein cortex from Heliconius erato (Crimson patched longwing butterfly).